A 78-amino-acid chain; its full sequence is Small ribosomal subunit protein bS18 (78 aa).

This sequence belongs to the bacterial ribosomal protein bS18 family. Part of the 30S ribosomal subunit. Forms a tight heterodimer with protein bS6.

Its function is as follows. Binds as a heterodimer with protein bS6 to the central domain of the 16S rRNA, where it helps stabilize the platform of the 30S subunit. In Nocardioides sp. (strain ATCC BAA-499 / JS614), this protein is Small ribosomal subunit protein bS18.